The following is a 167-amino-acid chain: NADH-ubiquinone oxidoreductase chain 6 (167 aa).

Transmembrane regions (helical) follow at residues 1 to 21 (MVLM…VASN), 23 to 43 (SPYF…GMLM), 47 to 67 (MTFL…VVFA), 86 to 106 (VFSY…AFVG), and 133 to 153 (AGGY…LVVL).

It belongs to the complex I subunit 6 family.

Its subcellular location is the mitochondrion membrane. The catalysed reaction is a ubiquinone + NADH + 5 H(+)(in) = a ubiquinol + NAD(+) + 4 H(+)(out). Core subunit of the mitochondrial membrane respiratory chain NADH dehydrogenase (Complex I) that is believed to belong to the minimal assembly required for catalysis. Complex I functions in the transfer of electrons from NADH to the respiratory chain. The immediate electron acceptor for the enzyme is believed to be ubiquinone. This is NADH-ubiquinone oxidoreductase chain 6 (MT-ND6) from Polypterus ornatipinnis (Ornate bichir).